The following is a 465-amino-acid chain: tRNA (guanine(37)-N(1))-methyltransferase (465 aa).

Residues H189, 227–228 (DL), and 255–256 (DA) each bind S-adenosyl-L-methionine. The interval 283–362 (YPKEGVPANE…GPGPPPSKPW (80 aa)) is disordered. The span at 291 to 320 (NENSSSNGNHNDVREGSQNGANESSVASTT) shows a compositional bias: polar residues. Positions 343 to 352 (TKRRNNKRVR) are enriched in basic residues. Position 371 (N371) interacts with S-adenosyl-L-methionine.

Belongs to the class I-like SAM-binding methyltransferase superfamily. TRM5/TYW2 family. Monomer.

The protein localises to the mitochondrion matrix. It is found in the nucleus. It localises to the cytoplasm. It carries out the reaction guanosine(37) in tRNA + S-adenosyl-L-methionine = N(1)-methylguanosine(37) in tRNA + S-adenosyl-L-homocysteine + H(+). Specifically methylates the N1 position of guanosine-37 in various cytoplasmic and mitochondrial tRNAs. Methylation is not dependent on the nature of the nucleoside 5' of the target nucleoside. This is the first step in the biosynthesis of wybutosine (yW), a modified base adjacent to the anticodon of tRNAs and required for accurate decoding. The chain is tRNA (guanine(37)-N(1))-methyltransferase from Sorghum bicolor (Sorghum).